A 456-amino-acid chain; its full sequence is Bifunctional protein GlmU (456 aa).

The pyrophosphorylase stretch occupies residues 1–227 (MKLRVVILAA…AQEVEGANNR (227 aa)). UDP-N-acetyl-alpha-D-glucosamine-binding positions include 8 to 11 (LAAG), Lys22, Gln73, 78 to 79 (GT), 100 to 102 (YGD), Gly137, Glu152, Asn167, and Asn225. Residue Asp102 participates in Mg(2+) binding. Asn225 serves as a coordination point for Mg(2+). The segment at 228 to 248 (QQLASLERALQQRQAEELMTQ) is linker. Residues 249–456 (GVTLIDPARF…WQRPQSKKGT (208 aa)) are N-acetyltransferase. Positions 331 and 349 each coordinate UDP-N-acetyl-alpha-D-glucosamine. Residue His361 is the Proton acceptor of the active site. The UDP-N-acetyl-alpha-D-glucosamine site is built by Tyr364 and Asn375. Acetyl-CoA contacts are provided by residues Ala378, 384 to 385 (NY), Ser403, Ala421, and Arg438.

The protein in the N-terminal section; belongs to the N-acetylglucosamine-1-phosphate uridyltransferase family. In the C-terminal section; belongs to the transferase hexapeptide repeat family. Homotrimer. Requires Mg(2+) as cofactor.

The protein localises to the cytoplasm. The catalysed reaction is alpha-D-glucosamine 1-phosphate + acetyl-CoA = N-acetyl-alpha-D-glucosamine 1-phosphate + CoA + H(+). The enzyme catalyses N-acetyl-alpha-D-glucosamine 1-phosphate + UTP + H(+) = UDP-N-acetyl-alpha-D-glucosamine + diphosphate. Its pathway is nucleotide-sugar biosynthesis; UDP-N-acetyl-alpha-D-glucosamine biosynthesis; N-acetyl-alpha-D-glucosamine 1-phosphate from alpha-D-glucosamine 6-phosphate (route II): step 2/2. It participates in nucleotide-sugar biosynthesis; UDP-N-acetyl-alpha-D-glucosamine biosynthesis; UDP-N-acetyl-alpha-D-glucosamine from N-acetyl-alpha-D-glucosamine 1-phosphate: step 1/1. It functions in the pathway bacterial outer membrane biogenesis; LPS lipid A biosynthesis. In terms of biological role, catalyzes the last two sequential reactions in the de novo biosynthetic pathway for UDP-N-acetylglucosamine (UDP-GlcNAc). The C-terminal domain catalyzes the transfer of acetyl group from acetyl coenzyme A to glucosamine-1-phosphate (GlcN-1-P) to produce N-acetylglucosamine-1-phosphate (GlcNAc-1-P), which is converted into UDP-GlcNAc by the transfer of uridine 5-monophosphate (from uridine 5-triphosphate), a reaction catalyzed by the N-terminal domain. The protein is Bifunctional protein GlmU of Idiomarina loihiensis (strain ATCC BAA-735 / DSM 15497 / L2-TR).